The sequence spans 206 residues: Small ribosomal subunit protein uS4 (206 aa).

The region spanning 94-157 is the S4 RNA-binding domain; it reads RRLDNVVYRL…RRRTYFKNLI (64 aa).

This sequence belongs to the universal ribosomal protein uS4 family. As to quaternary structure, part of the 30S ribosomal subunit. Contacts protein S5. The interaction surface between S4 and S5 is involved in control of translational fidelity.

Its function is as follows. One of the primary rRNA binding proteins, it binds directly to 16S rRNA where it nucleates assembly of the body of the 30S subunit. In terms of biological role, with S5 and S12 plays an important role in translational accuracy. The chain is Small ribosomal subunit protein uS4 from Roseiflexus sp. (strain RS-1).